A 178-amino-acid polypeptide reads, in one-letter code: MAEAITIARPYAEAVFKLARESGSLFSWSETLDAVNSIVRESQIRELISNPLISSVKLREIIFSVCGKKLNEDGKRLVSLLIDNQRLLVMPQIHELFEQLKAQHESILEAEVVSAFPLDSGQLEKLVSILEAKFQRKVKAEVSVDSELIGGVRIKIGDQVVDSSVHGKLEAMATALKS.

The protein belongs to the ATPase delta chain family. In terms of assembly, F-type ATPases have 2 components, F(1) - the catalytic core - and F(0) - the membrane proton channel. F(1) has five subunits: alpha(3), beta(3), gamma(1), delta(1), epsilon(1). F(0) has three main subunits: a(1), b(2) and c(10-14). The alpha and beta chains form an alternating ring which encloses part of the gamma chain. F(1) is attached to F(0) by a central stalk formed by the gamma and epsilon chains, while a peripheral stalk is formed by the delta and b chains.

Its subcellular location is the cell inner membrane. Functionally, f(1)F(0) ATP synthase produces ATP from ADP in the presence of a proton or sodium gradient. F-type ATPases consist of two structural domains, F(1) containing the extramembraneous catalytic core and F(0) containing the membrane proton channel, linked together by a central stalk and a peripheral stalk. During catalysis, ATP synthesis in the catalytic domain of F(1) is coupled via a rotary mechanism of the central stalk subunits to proton translocation. This protein is part of the stalk that links CF(0) to CF(1). It either transmits conformational changes from CF(0) to CF(1) or is implicated in proton conduction. The protein is ATP synthase subunit delta of Nitrosomonas europaea (strain ATCC 19718 / CIP 103999 / KCTC 2705 / NBRC 14298).